Consider the following 228-residue polypeptide: Superoxide dismutase [Mn], mitochondrial (228 aa).

Residues 1–24 (MALRTLVSRRTLATGLGFRQQLRG) constitute a mitochondrion transit peptide. Residues histidine 52, histidine 100, aspartate 189, and histidine 193 each contribute to the Mn(2+) site.

Belongs to the iron/manganese superoxide dismutase family. In terms of assembly, homotetramer. Requires Mn(2+) as cofactor. In terms of tissue distribution, expressed most abundantly in parts of the plant which exhibit a high metabolic activity. Expressed in pre-shooting flower buds, vegetative buds, immature fruits and fully expanded leaves of basal shoots and seedlings.

The protein resides in the mitochondrion matrix. The enzyme catalyses 2 superoxide + 2 H(+) = H2O2 + O2. Functionally, destroys superoxide anion radicals which are normally produced within the cells and which are toxic to biological systems. The chain is Superoxide dismutase [Mn], mitochondrial (SOD) from Prunus persica (Peach).